Here is a 396-residue protein sequence, read N- to C-terminus: Elongation factor Tu 2 (396 aa).

Residues 10 to 206 (KPHCNVGTIG…AVDDYIPQPE (197 aa)) enclose the tr-type G domain. The segment at 19–26 (GHVDHGKT) is G1. GTP is bound at residue 19–26 (GHVDHGKT). Mg(2+) is bound at residue Thr-26. The tract at residues 60–64 (GITIS) is G2. The tract at residues 81–84 (DCPG) is G3. Residues 81–85 (DCPGH) and 136–139 (NKCD) contribute to the GTP site. The tract at residues 136 to 139 (NKCD) is G4. Positions 174–176 (SAL) are G5.

This sequence belongs to the TRAFAC class translation factor GTPase superfamily. Classic translation factor GTPase family. EF-Tu/EF-1A subfamily. In terms of assembly, monomer.

It localises to the cytoplasm. It catalyses the reaction GTP + H2O = GDP + phosphate + H(+). Its function is as follows. GTP hydrolase that promotes the GTP-dependent binding of aminoacyl-tRNA to the A-site of ribosomes during protein biosynthesis. This Rhodospirillum rubrum (strain ATCC 11170 / ATH 1.1.1 / DSM 467 / LMG 4362 / NCIMB 8255 / S1) protein is Elongation factor Tu 2.